A 48-amino-acid chain; its full sequence is uncharacterized protein (48 aa).

This is an uncharacterized protein from Saccharomyces cerevisiae (strain ATCC 204508 / S288c) (Baker's yeast).